The chain runs to 73 residues: Antitoxin VapB2 (73 aa).

As to quaternary structure, forms a homodimer, which binds to a toxin homodimer, which then oligomerizes further to a hetero-octamer. When bound to toxin VapC2 the toxin activity is inhibited; 1 antitoxin may suffice to inhibit toxin.

Antitoxin component of a type II toxin-antitoxin (TA) system. Upon expression in M.smegmatis neutralizes the effect of cognate toxin VapC2. The C-terminal helix of the antitoxin may obstruct the toxin's RNA-binding groove, blocking access to the active sites. Additionally, the C-terminal arginine of the antitoxin may remove Mg(2+) ions from the toxin active sites. The chain is Antitoxin VapB2 (vapB2) from Mycobacterium tuberculosis (strain ATCC 25618 / H37Rv).